We begin with the raw amino-acid sequence, 494 residues long: Lysine--tRNA ligase (494 aa).

Mg(2+) contacts are provided by E407 and E414.

Belongs to the class-II aminoacyl-tRNA synthetase family. As to quaternary structure, homodimer. Requires Mg(2+) as cofactor.

It is found in the cytoplasm. It catalyses the reaction tRNA(Lys) + L-lysine + ATP = L-lysyl-tRNA(Lys) + AMP + diphosphate. The chain is Lysine--tRNA ligase from Lactococcus lactis subsp. cremoris (strain SK11).